The primary structure comprises 815 residues: (-)-kolavenyl diphosphate synthase TPS10, chloroplastic (815 aa).

Residues 1 to 50 constitute a chloroplast transit peptide; it reads MFMSSSSSSHARRPQLSSFSYLHPPLPFPGLSFSSTRDKRVNFDSTRIIS. K247 contacts substrate. Residues D379 and D381 each contribute to the Mg(2+) site. The DXDD motif signature appears at 379–382; sequence DIDD. Substrate is bound at residue K465.

Belongs to the terpene synthase family. Tpsc subfamily. Mg(2+) is required as a cofactor.

It is found in the plastid. Its subcellular location is the chloroplast. The catalysed reaction is (2E,6E,10E)-geranylgeranyl diphosphate = (-)-kolavenyl diphosphate. Inhibited by high concentrations of magnesium. Diterpene synthase that catalyzes the formation of (-)-kolavenyl diphosphate from geranylgeranyl diphosphate (GGPP). This is (-)-kolavenyl diphosphate synthase TPS10, chloroplastic from Tripterygium wilfordii (Thunder God vine).